Reading from the N-terminus, the 332-residue chain is Anthranilate phosphoribosyltransferase (332 aa).

5-phospho-alpha-D-ribose 1-diphosphate contacts are provided by residues Gly78, 81 to 82 (GD), Ser86, 88 to 91 (NIST), 106 to 114 (KHGNKSITS), and Ser118. Residue Gly78 coordinates anthranilate. A Mg(2+)-binding site is contributed by Ser90. Asn109 contacts anthranilate. Anthranilate is bound at residue Arg163. Residues Asp222 and Glu223 each coordinate Mg(2+).

Belongs to the anthranilate phosphoribosyltransferase family. Homodimer. Requires Mg(2+) as cofactor.

It carries out the reaction N-(5-phospho-beta-D-ribosyl)anthranilate + diphosphate = 5-phospho-alpha-D-ribose 1-diphosphate + anthranilate. It functions in the pathway amino-acid biosynthesis; L-tryptophan biosynthesis; L-tryptophan from chorismate: step 2/5. Its function is as follows. Catalyzes the transfer of the phosphoribosyl group of 5-phosphorylribose-1-pyrophosphate (PRPP) to anthranilate to yield N-(5'-phosphoribosyl)-anthranilate (PRA). The chain is Anthranilate phosphoribosyltransferase from Staphylococcus aureus (strain Mu3 / ATCC 700698).